The primary structure comprises 217 residues: Large ribosomal subunit protein uL3 (217 aa).

The span at 134-146 shows a compositional bias: polar residues; it reads GRATHGNSRSHNV. The disordered stretch occupies residues 134–154; sequence GRATHGNSRSHNVPGSIGMAQ. At glutamine 154 the chain carries N5-methylglutamine.

This sequence belongs to the universal ribosomal protein uL3 family. As to quaternary structure, part of the 50S ribosomal subunit. Forms a cluster with proteins L14 and L19. Post-translationally, methylated by PrmB.

One of the primary rRNA binding proteins, it binds directly near the 3'-end of the 23S rRNA, where it nucleates assembly of the 50S subunit. In Burkholderia lata (strain ATCC 17760 / DSM 23089 / LMG 22485 / NCIMB 9086 / R18194 / 383), this protein is Large ribosomal subunit protein uL3.